The following is a 1004-amino-acid chain: 2-oxoglutarate dehydrogenase E1 component (1004 aa).

It belongs to the alpha-ketoglutarate dehydrogenase family. As to quaternary structure, homodimer. Part of the 2-oxoglutarate dehydrogenase (OGDH) complex composed of E1 (2-oxoglutarate dehydrogenase), E2 (dihydrolipoamide succinyltransferase) and E3 (dihydrolipoamide dehydrogenase); the complex contains multiple copies of the three enzymatic components (E1, E2 and E3). The cofactor is thiamine diphosphate.

It catalyses the reaction N(6)-[(R)-lipoyl]-L-lysyl-[protein] + 2-oxoglutarate + H(+) = N(6)-[(R)-S(8)-succinyldihydrolipoyl]-L-lysyl-[protein] + CO2. In terms of biological role, E1 component of the 2-oxoglutarate dehydrogenase (OGDH) complex which catalyzes the decarboxylation of 2-oxoglutarate, the first step in the conversion of 2-oxoglutarate to succinyl-CoA and CO(2). The chain is 2-oxoglutarate dehydrogenase E1 component from Brucella suis (strain ATCC 23445 / NCTC 10510).